Here is a 425-residue protein sequence, read N- to C-terminus: Serine--tRNA ligase (425 aa).

L-serine is bound at residue threonine 230 to glutamate 232. Arginine 261–glutamate 263 contributes to the ATP binding site. Residue glutamate 284 participates in L-serine binding. Residue glutamate 348 to serine 351 coordinates ATP. Serine 384 serves as a coordination point for L-serine.

It belongs to the class-II aminoacyl-tRNA synthetase family. Type-1 seryl-tRNA synthetase subfamily. As to quaternary structure, homodimer. The tRNA molecule binds across the dimer.

The protein resides in the cytoplasm. It catalyses the reaction tRNA(Ser) + L-serine + ATP = L-seryl-tRNA(Ser) + AMP + diphosphate + H(+). The catalysed reaction is tRNA(Sec) + L-serine + ATP = L-seryl-tRNA(Sec) + AMP + diphosphate + H(+). The protein operates within aminoacyl-tRNA biosynthesis; selenocysteinyl-tRNA(Sec) biosynthesis; L-seryl-tRNA(Sec) from L-serine and tRNA(Sec): step 1/1. Functionally, catalyzes the attachment of serine to tRNA(Ser). Is also able to aminoacylate tRNA(Sec) with serine, to form the misacylated tRNA L-seryl-tRNA(Sec), which will be further converted into selenocysteinyl-tRNA(Sec). This is Serine--tRNA ligase from Streptococcus equi subsp. equi (strain 4047).